The primary structure comprises 618 residues: Pyranose 2-oxidase (618 aa).

Position 170 is a tele-8alpha-FAD histidine (H170). Substrate-binding residues include Q441 and H443. Residue H540 is the Proton acceptor of the active site. N583 is a catalytic residue.

This sequence belongs to the GMC oxidoreductase family. In terms of assembly, homotetramer. FAD serves as cofactor.

It carries out the reaction D-glucose + O2 = 2-dehydro-D-glucose + H2O2. Its function is as follows. Catalyzes the oxidation of various aldopyranoses and disaccharides on carbon-2 to the corresponding 2-keto sugars concomitant with the reduction of O(2) to H(2)O(2). This chain is Pyranose 2-oxidase (p2ox), found in Lyophyllum shimeji (Hon-shimeji).